Reading from the N-terminus, the 308-residue chain is MFDPETLRTFIAVAETGSFSKAAERLCKTTATISYRIKLLEENTGVALFFRTTRSVTLTAAGEHLLSQARDWLSWLESMPSELQQVNDGVERQVNIVINNLLYNPQAVAQLLAWLNERYPFTQFHISRQIYMGVWDSLLYEGFSLAIGVTGTEALANTFSLDPLGSVQWRFVMAADHPLANVEEPLTEAQLRRFPAVNIEDSARTLTKRVAWRLPGQKEIIVPDMETKIAAHLAGVGIGFLPKSLCQSMIDNQQLVSRVIPTMRPPSPLSLAWRKFGSGKAVEDIVTLFTQRRPEISGFLEIFGNPRS.

In terms of domain architecture, HTH lysR-type spans 2–59; it reads FDPETLRTFIAVAETGSFSKAAERLCKTTATISYRIKLLEENTGVALFFRTTRSVTLT. The segment at residues 19-38 is a DNA-binding region (H-T-H motif); sequence FSKAAERLCKTTATISYRIK.

It belongs to the LysR transcriptional regulatory family.

Its function is as follows. Positive regulator essential for the expression of AllD operon. Binds to the AllD promoter. The polypeptide is HTH-type transcriptional activator AllS (allS) (Escherichia coli O157:H7).